Reading from the N-terminus, the 110-residue chain is UPF0060 membrane protein Noc_2955 (110 aa).

The next 4 helical transmembrane spans lie at 7-27 (VGLF…AYLW), 33-53 (TIWL…LLSL), 63-83 (AAYG…VNGI), and 87-107 (TWDL…MFAP).

The protein belongs to the UPF0060 family.

It localises to the cell inner membrane. The sequence is that of UPF0060 membrane protein Noc_2955 from Nitrosococcus oceani (strain ATCC 19707 / BCRC 17464 / JCM 30415 / NCIMB 11848 / C-107).